A 77-amino-acid chain; its full sequence is Liver-expressed antimicrobial peptide 2 (77 aa).

The N-terminal stretch at 1 to 22 is a signal peptide; it reads MWHLKLCAVLMIFLLLLGQIDG. Residues 23–37 constitute a propeptide that is removed on maturation; the sequence is SPIPEVSSAKRRPRR. 2 disulfides stabilise this stretch: Cys54-Cys65 and Cys60-Cys70.

The protein belongs to the LEAP2 family.

The protein localises to the secreted. Functionally, has an antimicrobial activity. The chain is Liver-expressed antimicrobial peptide 2 (LEAP2) from Homo sapiens (Human).